Consider the following 624-residue polypeptide: Fibronectin type III domain-containing protein 2 (624 aa).

Positions 1–19 are cleaved as a signal peptide; it reads MREQFSVLVISLLFSSSYG. Fibronectin type-III domains follow at residues 131 to 236, 240 to 330, 334 to 430, 431 to 524, and 527 to 624; these read PPQN…TPDI, EPTN…TDVF, MPRF…TVPT, VPRE…PKRD, and VPPN…WPGR.

Prismatic layer of shell (at protein level).

It is found in the secreted. The sequence is that of Fibronectin type III domain-containing protein 2 from Margaritifera margaritifera (Freshwater pearl mussel).